Reading from the N-terminus, the 380-residue chain is Lipid-A-disaccharide synthase (380 aa).

It belongs to the LpxB family.

The enzyme catalyses a lipid X + a UDP-2-N,3-O-bis[(3R)-3-hydroxyacyl]-alpha-D-glucosamine = a lipid A disaccharide + UDP + H(+). The protein operates within bacterial outer membrane biogenesis; LPS lipid A biosynthesis. Its function is as follows. Condensation of UDP-2,3-diacylglucosamine and 2,3-diacylglucosamine-1-phosphate to form lipid A disaccharide, a precursor of lipid A, a phosphorylated glycolipid that anchors the lipopolysaccharide to the outer membrane of the cell. This is Lipid-A-disaccharide synthase from Francisella tularensis subsp. tularensis (strain FSC 198).